The primary structure comprises 312 residues: Ribosomal RNA small subunit methyltransferase H (312 aa).

S-adenosyl-L-methionine is bound by residues 35–37 (GGH), Asp-55, Phe-85, Asp-101, and Gln-108.

Belongs to the methyltransferase superfamily. RsmH family.

The protein resides in the cytoplasm. The catalysed reaction is cytidine(1402) in 16S rRNA + S-adenosyl-L-methionine = N(4)-methylcytidine(1402) in 16S rRNA + S-adenosyl-L-homocysteine + H(+). In terms of biological role, specifically methylates the N4 position of cytidine in position 1402 (C1402) of 16S rRNA. This chain is Ribosomal RNA small subunit methyltransferase H, found in Buchnera aphidicola subsp. Acyrthosiphon pisum (strain Tuc7).